The chain runs to 1409 residues: DNA-directed RNA polymerase subunit beta' (1409 aa).

Positions 70, 72, 85, and 88 each coordinate Zn(2+). Aspartate 458, aspartate 460, and aspartate 462 together coordinate Mg(2+). Zn(2+)-binding residues include cysteine 813, cysteine 887, cysteine 894, and cysteine 897. Residues 1385–1403 (EAAELAGSTSDVSTTADAS) are compositionally biased toward low complexity. The segment at 1385–1409 (EAAELAGSTSDVSTTADASEGAASE) is disordered.

Belongs to the RNA polymerase beta' chain family. In terms of assembly, the RNAP catalytic core consists of 2 alpha, 1 beta, 1 beta' and 1 omega subunit. When a sigma factor is associated with the core the holoenzyme is formed, which can initiate transcription. Mg(2+) serves as cofactor. Zn(2+) is required as a cofactor.

The catalysed reaction is RNA(n) + a ribonucleoside 5'-triphosphate = RNA(n+1) + diphosphate. Its function is as follows. DNA-dependent RNA polymerase catalyzes the transcription of DNA into RNA using the four ribonucleoside triphosphates as substrates. In Variovorax paradoxus (strain S110), this protein is DNA-directed RNA polymerase subunit beta'.